The chain runs to 85 residues: Small ribosomal subunit protein uS17 (85 aa).

It belongs to the universal ribosomal protein uS17 family. Part of the 30S ribosomal subunit.

Its function is as follows. One of the primary rRNA binding proteins, it binds specifically to the 5'-end of 16S ribosomal RNA. In Mycoplasma pneumoniae (strain ATCC 29342 / M129 / Subtype 1) (Mycoplasmoides pneumoniae), this protein is Small ribosomal subunit protein uS17.